Consider the following 368-residue polypeptide: Protein mab-21-like (368 aa).

The protein belongs to the mab-21 family.

The protein is Protein mab-21-like of Drosophila melanogaster (Fruit fly).